The following is a 1931-amino-acid chain: Chitin synthase 5 (1931 aa).

The Myosin motor domain maps to 11–777; the sequence is LGVTDLSSLA…LFRFLEDRLR (767 aa). 122-129 contacts ATP; the sequence is GPTGSGKS. Asn-510, Asn-538, and Asn-676 each carry an N-linked (GlcNAc...) asparagine glycan. The actin-binding stretch occupies residues 655 to 677; that stretch reads VDSLLKSFDQTQTWYIFALRPND. The tract at residues 798-817 is disordered; it reads DPFSPHRYQPTSFDSQDHVY. Residue Asn-842 is glycosylated (N-linked (GlcNAc...) asparagine). The next 2 helical transmembrane spans lie at 912-932 and 951-971; these read WVWLCSILTWWIPGFLLSKIA and MIIWFICGCAIFVIAILGPVI. Asn-1062, Asn-1078, and Asn-1146 each carry an N-linked (GlcNAc...) asparagine glycan. The chain crosses the membrane as a helical span at residues 1220–1240; that stretch reads ILLALSCVMVAVIGFKFLSAL. An N-linked (GlcNAc...) asparagine glycan is attached at Asn-1583. A run of 3 helical transmembrane segments spans residues 1615 to 1635, 1641 to 1661, and 1668 to 1688; these read LSTIIAPVTVAYIVYLIYLIV, IPTLSIIMLAAIYGLQAMIFI, and MIAWMIFYICAIPVFSFLLPL. A disordered region spans residues 1826 to 1847; the sequence is AHRPSLDDTSSFHQPYQPAPRP. Positions 1875-1930 constitute a DEK-C domain; that stretch reads AITDSQLERSIRKICANAELDKLTKKGVRKELEREYGVELTERREAINRLVEKVLT.

It in the N-terminal section; belongs to the TRAFAC class CC myosin-kinesin ATPase superfamily. Myosin family. The protein in the C-terminal section; belongs to the chitin synthase family. Class V subfamily.

Its subcellular location is the cell membrane. The protein localises to the cell septum. It is found in the cell tip. The enzyme catalyses [(1-&gt;4)-N-acetyl-beta-D-glucosaminyl](n) + UDP-N-acetyl-alpha-D-glucosamine = [(1-&gt;4)-N-acetyl-beta-D-glucosaminyl](n+1) + UDP + H(+). Polymerizes chitin, a structural polymer of the cell wall and septum, by transferring the sugar moiety of UDP-GlcNAc to the non-reducing end of the growing chitin polymer. Produces a large proportion of the chitin that is not deacetylated to chitosan. The chain is Chitin synthase 5 from Cryptococcus neoformans var. grubii serotype A (strain H99 / ATCC 208821 / CBS 10515 / FGSC 9487) (Filobasidiella neoformans var. grubii).